The chain runs to 255 residues: MNDYIVVKCGGSMLEQLNDVFFDCIKKLQQQYKVVIVHGGGPEIDAKLKDCNINVEKRDGLRVTPKEVMDVVQMVLCGSTNKKFVMNLQKHNLLAVGCSGCDGKLLQVQPVSEEIGYVGEVSYVETALLKGLINMNYIPVIAPIGIHDNEIYNINADTAAAGIAAALSAKELILITDVDGILHEGKLVKKTDESEIATLIEKGVITGGMIPKVQAALASLKMGVQKISIVNRTKDFTEDTGECIGTTVTRGVSIV.

Residues 40 to 41 (GG), R62, and N153 each bind substrate.

It belongs to the acetylglutamate kinase family. ArgB subfamily.

It localises to the cytoplasm. The catalysed reaction is N-acetyl-L-glutamate + ATP = N-acetyl-L-glutamyl 5-phosphate + ADP. It functions in the pathway amino-acid biosynthesis; L-arginine biosynthesis; N(2)-acetyl-L-ornithine from L-glutamate: step 2/4. Its function is as follows. Catalyzes the ATP-dependent phosphorylation of N-acetyl-L-glutamate. The polypeptide is Acetylglutamate kinase (Bacillus anthracis (strain CDC 684 / NRRL 3495)).